The chain runs to 399 residues: Ribose-phosphate pyrophosphokinase 2, chloroplastic (399 aa).

The N-terminal 32 residues, 1–32 (MAAKAAALSSSPFVSSRRLSSPAASLRARTPR), are a transit peptide targeting the chloroplast. Mg(2+)-binding residues include D214, H216, D225, and D229. A binding of phosphoribosylpyrophosphate region spans residues 299 to 314 (GKVAIMVDDMIDTAGT).

It belongs to the ribose-phosphate pyrophosphokinase family. The cofactor is Mg(2+).

It is found in the plastid. The protein resides in the chloroplast. It catalyses the reaction D-ribose 5-phosphate + ATP = 5-phospho-alpha-D-ribose 1-diphosphate + AMP + H(+). This Oryza sativa subsp. japonica (Rice) protein is Ribose-phosphate pyrophosphokinase 2, chloroplastic.